Here is a 465-residue protein sequence, read N- to C-terminus: Glutamate--tRNA ligase 2 (465 aa).

The short motif at 8-18 (PSPTGLMHLGN) is the 'HIGH' region element. Residues 249–253 (PLSKR) carry the 'KMSKS' region motif. Position 252 (Lys-252) interacts with ATP.

Belongs to the class-I aminoacyl-tRNA synthetase family. Glutamate--tRNA ligase type 1 subfamily. As to quaternary structure, monomer.

It localises to the cytoplasm. It catalyses the reaction tRNA(Glu) + L-glutamate + ATP = L-glutamyl-tRNA(Glu) + AMP + diphosphate. Catalyzes the attachment of glutamate to tRNA(Glu) in a two-step reaction: glutamate is first activated by ATP to form Glu-AMP and then transferred to the acceptor end of tRNA(Glu). This chain is Glutamate--tRNA ligase 2, found in Coxiella burnetii (strain RSA 331 / Henzerling II).